Reading from the N-terminus, the 146-residue chain is MRGSELSLLLLALVLCQAPRGPAAPVSTGAGGGTVLAKMYPRGSHWAVGHLMGKKSTDESPSLYAADRDGLKEQLRGYVRWEEAARDLLDLLEAAGNQSHQPPQHPPLSLQPTWDPEDGSYFNDVQTAKLVDSLLQVLKEKGGTAS.

Residues 1 to 23 form the signal peptide; it reads MRGSELSLLLLALVLCQAPRGPA. At methionine 52 the chain carries Methionine amide. The propeptide occupies 56 to 146; the sequence is STDESPSLYA…VLKEKGGTAS (91 aa). A compositionally biased stretch (low complexity) spans 94 to 112; that stretch reads AAGNQSHQPPQHPPLSLQP. The tract at residues 94-121 is disordered; the sequence is AAGNQSHQPPQHPPLSLQPTWDPEDGSY.

This sequence belongs to the bombesin/neuromedin-B/ranatensin family. As to expression, detected in peptidergic dorsal root ganglion neurons (at protein level). Expressed in several dozen neurons throughout the dorsal retrotrapezoid nucleus/parafacial respiratory group (RTN/pFRG) as well as in scattered cells in the nucleus tractus solitarius and parabrachial nucleus (at protein level). Within the RTN/pFRG, expressed in neuronal subpopulations distinct from those expressing Nmb (at protein level). Expressed in L6 corticothalamic neurons (at protein level). Strongly expressed in several input areas of the auditory cortex including the lateral amygdala, contralateral auditory cortex, temporal association area, perirhinal cortex and auditory thalamic nuclei (at protein level). Detected in the suprachiasmatic nucleus in the hypothalamus. Detected in a subset of glutamatergic cells in the cortex. Highly expressed both in the lateral nucleus of the amygdala, and in regions sending synaptic projections to the lateral nucleus.

The protein localises to the secreted. Its subcellular location is the cytoplasmic vesicle. It localises to the secretory vesicle lumen. It is found in the cell projection. The protein resides in the neuron projection. Stimulates the release of gastrin and other gastrointestinal hormones. Contributes to the perception of prurient stimuli and to the transmission of itch signals in the spinal cord that promote scratching behavior. Contributes primarily to nonhistaminergic itch sensation. In one study, shown to act in the amygdala as part of an inhibitory network which inhibits memory specifically related to learned fear. In another study, shown to act on vasoactive intestinal peptide (VIP)-expressing cells in the auditory cortex, most likely via extrasynaptic diffusion from local and long-range sources, to mediate disinhibition of glutamatergic cells via VIP cell-specific GRPR signaling which leads to enhanced auditory fear memories. Contributes to the regulation of food intake. Inhibits voltage-gated sodium channels but enhances voltage-gated potassium channels in hippocampal neurons. Contributes to the induction of sighing by acting directly on the pre-Botzinger complex, a cluster of several thousand neurons in the ventrolateral medulla responsible for inspiration during respiratory activity. Its function is as follows. Induces an itch response through activation of receptors present on mast cells, triggering mast cell degranulation. The sequence is that of Gastrin-releasing peptide (Grp) from Mus musculus (Mouse).